A 303-amino-acid polypeptide reads, in one-letter code: Putative fimbrium subunit Fim1C (303 aa).

The N-terminal stretch at 1–22 is a signal peptide; it reads MKKQALICALLATVLLPGCSED.

This sequence belongs to the bacteroidetes fimbrillin superfamily. Mfa-like family. May be part of the fimbrial tip.

It localises to the fimbrium. In terms of biological role, putative component of the fimbrium tip. Fimbriae are filamentous appendages on the cell surface that mediate cell adhesion and biofilm formation. The polypeptide is Putative fimbrium subunit Fim1C (fim1C) (Bacteroides uniformis (strain ATCC 8492 / DSM 6597 / CCUG 4942 / CIP 103695 / JCM 5828 / KCTC 5204 / NCTC 13054 / VPI 0061)).